Reading from the N-terminus, the 442-residue chain is Serine protease AprX (442 aa).

The region spanning 122 to 439 (KALLDTATEA…AGAVNAENSV (318 aa)) is the Peptidase S8 domain. Catalysis depends on charge relay system residues Asp-155 and His-187. The disordered stretch occupies residues 318–337 (DNNTASSDDDTVASFSSRGP). The active-site Charge relay system is the Ser-384. Positions 423–442 (EDPNIYGAGAVNAENSVPGQ) are disordered.

This sequence belongs to the peptidase S8 family.

Its subcellular location is the cytoplasm. With respect to regulation, is completely inhibited by phenylmethanesulphonylfluoride (PMSF) in vitro. Functionally, displays serine protease activity. Seems to have a broad substrate specificity. The sequence is that of Serine protease AprX (aprX) from Bacillus subtilis (strain 168).